We begin with the raw amino-acid sequence, 339 residues long: Type IV secretion system protein PtlH homolog (339 aa).

It belongs to the GSP E family.

The sequence is that of Type IV secretion system protein PtlH homolog (ptlH) from Bordetella bronchiseptica (strain ATCC BAA-588 / NCTC 13252 / RB50) (Alcaligenes bronchisepticus).